The primary structure comprises 946 residues: Bifunctional glutamine synthetase adenylyltransferase/adenylyl-removing enzyme (946 aa).

The adenylyl removase stretch occupies residues 1 to 440 (MKPLSSPLQQ…VFNELIGDDE (440 aa)). Residues 449-946 (SEQWRELWQD…ASWQKWLVEE (498 aa)) form an adenylyl transferase region.

This sequence belongs to the GlnE family. It depends on Mg(2+) as a cofactor.

It carries out the reaction [glutamine synthetase]-O(4)-(5'-adenylyl)-L-tyrosine + phosphate = [glutamine synthetase]-L-tyrosine + ADP. The enzyme catalyses [glutamine synthetase]-L-tyrosine + ATP = [glutamine synthetase]-O(4)-(5'-adenylyl)-L-tyrosine + diphosphate. Functionally, involved in the regulation of glutamine synthetase GlnA, a key enzyme in the process to assimilate ammonia. When cellular nitrogen levels are high, the C-terminal adenylyl transferase (AT) inactivates GlnA by covalent transfer of an adenylyl group from ATP to specific tyrosine residue of GlnA, thus reducing its activity. Conversely, when nitrogen levels are low, the N-terminal adenylyl removase (AR) activates GlnA by removing the adenylyl group by phosphorolysis, increasing its activity. The regulatory region of GlnE binds the signal transduction protein PII (GlnB) which indicates the nitrogen status of the cell. This chain is Bifunctional glutamine synthetase adenylyltransferase/adenylyl-removing enzyme, found in Shigella sonnei (strain Ss046).